The primary structure comprises 476 residues: Amino acid permease 3 (476 aa).

The Cytoplasmic segment spans residues methionine 1–serine 33. The helical transmembrane segment at valine 34 to alanine 54 threads the bilayer. Residues tryptophan 55–threonine 57 are Extracellular-facing. The helical transmembrane segment at alanine 58–phenylalanine 78 threads the bilayer. Over threonine 79–tyrosine 122 the chain is Cytoplasmic. Residues leucine 123–isoleucine 143 traverse the membrane as a helical segment. At lysine 144–methionine 166 the chain is on the extracellular side. 2 helical membrane-spanning segments follow: residues isoleucine 167–tryptophan 187 and leucine 188–isoleucine 208. Over alanine 209 to leucine 277 the chain is Extracellular. The chain crosses the membrane as a helical span at residues valine 278–phenylalanine 298. Residues glycine 299 to aspartate 300 are Cytoplasmic-facing. A helical transmembrane segment spans residues leucine 301 to isoleucine 321. The Extracellular portion of the chain corresponds to alanine 322–alanine 324. The helical transmembrane segment at alanine 325–isoleucine 345 threads the bilayer. The Cytoplasmic segment spans residues glutamate 346–threonine 384. 2 consecutive transmembrane segments (helical) span residues valine 385–glycine 405 and leucine 406–alanine 426. Residues glutamine 427–glutamine 441 lie on the Cytoplasmic side of the membrane. The helical transmembrane segment at valine 442–valine 462 threads the bilayer. The Extracellular portion of the chain corresponds to leucine 463–tyrosine 476.

Belongs to the amino acid/polyamine transporter 2 family. Amino acid/auxin permease (AAAP) (TC 2.A.18.2) subfamily. Expressed in the root phloem. Detected in stamens, in cotyledons, and in major veins of mature leaves.

Its subcellular location is the cell membrane. It localises to the nucleus membrane. The protein resides in the endomembrane system. Its activity is regulated as follows. Inhibited by carbonylcyanide m-chlorophenylhydrazone and 2,4-dinitrophenol. Its function is as follows. Amino acid-proton symporter. Stereospecific transporter with a broad specificity for GABA, tryptophan and both neutral and basic amino acids. High affinity transport of cationic amino acids. In Arabidopsis thaliana (Mouse-ear cress), this protein is Amino acid permease 3 (AAP3).